A 466-amino-acid polypeptide reads, in one-letter code: Bifunctional protein GlmU (466 aa).

The interval 1-236 is pyrophosphorylase; that stretch reads MEVMPQPLTI…PAEALGINDR (236 aa). UDP-N-acetyl-alpha-D-glucosamine is bound by residues 13 to 16, Lys27, Gln79, 84 to 85, 107 to 109, Gly146, Glu161, Asn176, and Asn234; these read LAAG, GT, and YGD. Asp109 is a binding site for Mg(2+). Position 234 (Asn234) interacts with Mg(2+). Positions 237 to 257 are linker; the sequence is AQLAEVDRIFRDRKRRAVMAA. Residues 258–466 are N-acetyltransferase; the sequence is GVTLIQPETI…AKKRRKLAKT (209 aa). Residues Arg340 and Lys358 each contribute to the UDP-N-acetyl-alpha-D-glucosamine site. Catalysis depends on His370, which acts as the Proton acceptor. UDP-N-acetyl-alpha-D-glucosamine contacts are provided by Tyr373 and Asn384. Residues Ala387, 393 to 394, Ser412, Ala430, and Arg447 each bind acetyl-CoA; that span reads NY.

The protein in the N-terminal section; belongs to the N-acetylglucosamine-1-phosphate uridyltransferase family. It in the C-terminal section; belongs to the transferase hexapeptide repeat family. Homotrimer. Mg(2+) is required as a cofactor.

It is found in the cytoplasm. It carries out the reaction alpha-D-glucosamine 1-phosphate + acetyl-CoA = N-acetyl-alpha-D-glucosamine 1-phosphate + CoA + H(+). It catalyses the reaction N-acetyl-alpha-D-glucosamine 1-phosphate + UTP + H(+) = UDP-N-acetyl-alpha-D-glucosamine + diphosphate. It functions in the pathway nucleotide-sugar biosynthesis; UDP-N-acetyl-alpha-D-glucosamine biosynthesis; N-acetyl-alpha-D-glucosamine 1-phosphate from alpha-D-glucosamine 6-phosphate (route II): step 2/2. The protein operates within nucleotide-sugar biosynthesis; UDP-N-acetyl-alpha-D-glucosamine biosynthesis; UDP-N-acetyl-alpha-D-glucosamine from N-acetyl-alpha-D-glucosamine 1-phosphate: step 1/1. Its pathway is bacterial outer membrane biogenesis; LPS lipid A biosynthesis. Its function is as follows. Catalyzes the last two sequential reactions in the de novo biosynthetic pathway for UDP-N-acetylglucosamine (UDP-GlcNAc). The C-terminal domain catalyzes the transfer of acetyl group from acetyl coenzyme A to glucosamine-1-phosphate (GlcN-1-P) to produce N-acetylglucosamine-1-phosphate (GlcNAc-1-P), which is converted into UDP-GlcNAc by the transfer of uridine 5-monophosphate (from uridine 5-triphosphate), a reaction catalyzed by the N-terminal domain. This chain is Bifunctional protein GlmU, found in Solibacter usitatus (strain Ellin6076).